Reading from the N-terminus, the 181-residue chain is Ribonuclease M5 (181 aa).

In terms of domain architecture, Toprim spans 3–86; it reads KEVIVVEGRD…AYISQEEGTK (84 aa). Positions 9, 55, and 57 each coordinate Mg(2+).

This sequence belongs to the ribonuclease M5 family. Mg(2+) serves as cofactor.

The protein resides in the cytoplasm. The enzyme catalyses Endonucleolytic cleavage of RNA, removing 21 and 42 nucleotides, respectively, from the 5'- and 3'-termini of a 5S-rRNA precursor.. In terms of biological role, required for correct processing of both the 5' and 3' ends of 5S rRNA precursor. Cleaves both sides of a double-stranded region yielding mature 5S rRNA in one step. The chain is Ribonuclease M5 from Clostridium botulinum (strain Hall / ATCC 3502 / NCTC 13319 / Type A).